Reading from the N-terminus, the 338-residue chain is Glycerol-3-phosphate dehydrogenase [NAD(P)+] (338 aa).

Residues Ser12, Trp13, and Lys110 each contribute to the NADPH site. Residues Lys110, Gly141, and Ser143 each contribute to the sn-glycerol 3-phosphate site. Ala145 is a binding site for NADPH. Residues Lys196, Asp249, Ser259, Arg260, and Asn261 each coordinate sn-glycerol 3-phosphate. The Proton acceptor role is filled by Lys196. Arg260 contributes to the NADPH binding site. Residues Val284 and Glu286 each coordinate NADPH.

It belongs to the NAD-dependent glycerol-3-phosphate dehydrogenase family.

Its subcellular location is the cytoplasm. It catalyses the reaction sn-glycerol 3-phosphate + NAD(+) = dihydroxyacetone phosphate + NADH + H(+). The enzyme catalyses sn-glycerol 3-phosphate + NADP(+) = dihydroxyacetone phosphate + NADPH + H(+). Its pathway is membrane lipid metabolism; glycerophospholipid metabolism. Catalyzes the reduction of the glycolytic intermediate dihydroxyacetone phosphate (DHAP) to sn-glycerol 3-phosphate (G3P), the key precursor for phospholipid synthesis. The protein is Glycerol-3-phosphate dehydrogenase [NAD(P)+] of Lactiplantibacillus plantarum (strain ATCC BAA-793 / NCIMB 8826 / WCFS1) (Lactobacillus plantarum).